The following is an 856-amino-acid chain: Probable alpha,alpha-trehalose-phosphate synthase [UDP-forming] 8 (856 aa).

Position 5 is a phosphoserine (serine 5). A Phosphothreonine modification is found at threonine 32. The interval 57–541 (ERKIIVANML…AKSFMQDLER (485 aa)) is glycosyltransferase.

It in the N-terminal section; belongs to the glycosyltransferase 20 family. In the C-terminal section; belongs to the trehalose phosphatase family. Expressed in leaves, roots, stems and flowers.

It catalyses the reaction D-glucose 6-phosphate + UDP-alpha-D-glucose = alpha,alpha-trehalose 6-phosphate + UDP + H(+). The chain is Probable alpha,alpha-trehalose-phosphate synthase [UDP-forming] 8 (TPS8) from Arabidopsis thaliana (Mouse-ear cress).